The primary structure comprises 239 residues: MTNEDFIEALSSAGITLTTQQVRQFERYYELLVATNEHVNLTAITEKKDVYLKHFYDSLTVAMYEQKLKSSESTLIDIGTGAGFPSLPLKIAFPDLKITMVDALKKRVNFLQEVVDTLDLTGVEIVHGRAEDIGQNPKYRENFDYATARAVARTSVLAEYTLPFVKIGGRFLVMKGSAAHQELLDGQKALAMLGGQVNEEFVFTLPNGDQRYIQIVDKKTKTPKKYPRQAGTPSKKPIS.

S-adenosyl-L-methionine is bound by residues Gly-79, Phe-84, 130-131 (AE), and Arg-149. Residues 218-239 (KKTKTPKKYPRQAGTPSKKPIS) form a disordered region.

It belongs to the methyltransferase superfamily. RNA methyltransferase RsmG family.

The protein resides in the cytoplasm. Functionally, specifically methylates the N7 position of a guanine in 16S rRNA. In Leuconostoc mesenteroides subsp. mesenteroides (strain ATCC 8293 / DSM 20343 / BCRC 11652 / CCM 1803 / JCM 6124 / NCDO 523 / NBRC 100496 / NCIMB 8023 / NCTC 12954 / NRRL B-1118 / 37Y), this protein is Ribosomal RNA small subunit methyltransferase G.